Here is a 261-residue protein sequence, read N- to C-terminus: Cytochrome c oxidase subunit 3 (261 aa).

Topologically, residues 1–15 (MAHQAHSYHMVDPSP) are mitochondrial matrix. The helical transmembrane segment at 16–34 (WPIFGAITALLTTSGLIMW) threads the bilayer. The Mitochondrial intermembrane portion of the chain corresponds to 35–40 (FHYNSI). A helical transmembrane segment spans residues 41-66 (ALLTAGLLSMLLVMIQWWRDVVREST). The Mitochondrial matrix portion of the chain corresponds to 67-72 (FQGHHT). Residues 73-105 (PTVQKGLRYGMILFITSEAFFFLGFFWAFFHSS) traverse the membrane as a helical segment. The Mitochondrial intermembrane portion of the chain corresponds to 106–128 (LAPTPELGGQWPPTGIKPLNPLE). The chain crosses the membrane as a helical span at residues 129–152 (VPLLNTAILLASGVTVTWAHHSIT). The Mitochondrial matrix segment spans residues 153–155 (EGN). The chain crosses the membrane as a helical span at residues 156 to 183 (RKQAIHALTLTILLGFYFTALQAMEYHE). The Mitochondrial intermembrane segment spans residues 184 to 190 (ASFSIAD). The chain crosses the membrane as a helical span at residues 191–223 (SVYGSTFFVATGFHGLHVIIGSSFLTICLLRLI). Topologically, residues 224-232 (KFHFTSNHH) are mitochondrial matrix. A helical membrane pass occupies residues 233–256 (FGFEAAAWYWHFVDIIWLFLYMSM). Over 257–261 (YWWGS) the chain is Mitochondrial intermembrane.

Belongs to the cytochrome c oxidase subunit 3 family. In terms of assembly, component of the cytochrome c oxidase (complex IV, CIV), a multisubunit enzyme composed of 14 subunits. The complex is composed of a catalytic core of 3 subunits MT-CO1, MT-CO2 and MT-CO3, encoded in the mitochondrial DNA, and 11 supernumerary subunits COX4I, COX5A, COX5B, COX6A, COX6B, COX6C, COX7A, COX7B, COX7C, COX8 and NDUFA4, which are encoded in the nuclear genome. The complex exists as a monomer or a dimer and forms supercomplexes (SCs) in the inner mitochondrial membrane with NADH-ubiquinone oxidoreductase (complex I, CI) and ubiquinol-cytochrome c oxidoreductase (cytochrome b-c1 complex, complex III, CIII), resulting in different assemblies (supercomplex SCI(1)III(2)IV(1) and megacomplex MCI(2)III(2)IV(2)).

It localises to the mitochondrion inner membrane. It carries out the reaction 4 Fe(II)-[cytochrome c] + O2 + 8 H(+)(in) = 4 Fe(III)-[cytochrome c] + 2 H2O + 4 H(+)(out). Its function is as follows. Component of the cytochrome c oxidase, the last enzyme in the mitochondrial electron transport chain which drives oxidative phosphorylation. The respiratory chain contains 3 multisubunit complexes succinate dehydrogenase (complex II, CII), ubiquinol-cytochrome c oxidoreductase (cytochrome b-c1 complex, complex III, CIII) and cytochrome c oxidase (complex IV, CIV), that cooperate to transfer electrons derived from NADH and succinate to molecular oxygen, creating an electrochemical gradient over the inner membrane that drives transmembrane transport and the ATP synthase. Cytochrome c oxidase is the component of the respiratory chain that catalyzes the reduction of oxygen to water. Electrons originating from reduced cytochrome c in the intermembrane space (IMS) are transferred via the dinuclear copper A center (CU(A)) of subunit 2 and heme A of subunit 1 to the active site in subunit 1, a binuclear center (BNC) formed by heme A3 and copper B (CU(B)). The BNC reduces molecular oxygen to 2 water molecules using 4 electrons from cytochrome c in the IMS and 4 protons from the mitochondrial matrix. The protein is Cytochrome c oxidase subunit 3 (MT-CO3) of Coturnix japonica (Japanese quail).